Consider the following 141-residue polypeptide: Large ribosomal subunit protein uL11 (141 aa).

This sequence belongs to the universal ribosomal protein uL11 family. As to quaternary structure, part of the ribosomal stalk of the 50S ribosomal subunit. Interacts with L10 and the large rRNA to form the base of the stalk. L10 forms an elongated spine to which L12 dimers bind in a sequential fashion forming a multimeric L10(L12)X complex. In terms of processing, one or more lysine residues are methylated.

Its function is as follows. Forms part of the ribosomal stalk which helps the ribosome interact with GTP-bound translation factors. The chain is Large ribosomal subunit protein uL11 from Microcystis aeruginosa (strain NIES-843 / IAM M-2473).